The following is a 37-amino-acid chain: Serrulin (37 aa).

The interval Phe-16 to Gly-37 is disordered. A Lysine amide modification is found at Lys-36.

Expressed in hemocytes (at protein level).

Its subcellular location is the secreted. Antimicrobial protein with activity against Gram-positive and Gram-negative bacteria, filamentous fungus, and yeast. Was tested against Micrococcus luteus A270 (MIC=0.5-1 uM), Echerichia coli SBS 363 (MIC=9-16 uM), Pseudomonas aeruginosa (MIC=0.01-0.3 uM), Aspergillus niger (MIC=3-6 uM), and Candida albicans MDM8 (MIC=1.5-3 uM). Has no hemolytic activity against human erythrocytes. The sequence is that of Serrulin from Tityus serrulatus (Brazilian scorpion).